A 158-amino-acid polypeptide reads, in one-letter code: UPF0102 protein GbCGDNIH1_0975 (158 aa).

This sequence belongs to the UPF0102 family.

The polypeptide is UPF0102 protein GbCGDNIH1_0975 (Granulibacter bethesdensis (strain ATCC BAA-1260 / CGDNIH1)).